Reading from the N-terminus, the 225-residue chain is Orotate phosphoribosyltransferase (225 aa).

Lys-31 provides a ligand contact to 5-phospho-alpha-D-ribose 1-diphosphate. An orotate-binding site is contributed by 39–40; the sequence is FF. 5-phospho-alpha-D-ribose 1-diphosphate is bound by residues 78 to 79, Arg-105, Lys-106, Lys-109, His-111, and 130 to 138; these read YK and DDVLTSGKA. Residues Thr-134 and Arg-163 each contribute to the orotate site.

Belongs to the purine/pyrimidine phosphoribosyltransferase family. PyrE subfamily. In terms of assembly, homodimer.

The enzyme catalyses orotidine 5'-phosphate + diphosphate = orotate + 5-phospho-alpha-D-ribose 1-diphosphate. It participates in pyrimidine metabolism; UMP biosynthesis via de novo pathway; UMP from orotate: step 1/2. Functionally, catalyzes the transfer of a ribosyl phosphate group from 5-phosphoribose 1-diphosphate to orotate, leading to the formation of orotidine monophosphate (OMP). This is Orotate phosphoribosyltransferase (URA5) from Cryptococcus neoformans var. neoformans serotype D (strain B-3501A) (Filobasidiella neoformans).